The sequence spans 435 residues: MTSSEGPGIPAIKTPPVKLRGSCHACALSKLKCSQDKPTCSRCVKRGTACQYLASKRAGRKQGSKTGSFKSFYNMKTDYSTSINKDDDRRELMEVSTELMQYALQQDRSLEVYRRNQYHQRTPSYPESIPSLLSSTGPGTSATSPLTLGPPDYDGYLASPISLSLLDVPDMDYFPGADMSANVMDGFPDPPSFFPSGEPIPTLQENILKTSFADSPVPANSPSVPPTPDVTSVGTPRQCFCFPRALTLLRELFPNPSLSCVTPSSESGSASPPTVQQVITKNEQTLRDITEIIECSCSEDGYTITIITLAAFKVLAWYSAVAHISPISEDSQALEEIDRTPAVVRGYNIDGEDQGRMAAQLVLSELHRVQRLVGNLYQRLKDQVSGGKPARLSTTGVNDSNHYSLPFHLLERLAVDLGAQLRSLSSEIVDRLRRG.

Residues 23 to 50 (CHACALSKLKCSQDKPTCSRCVKRGTAC) constitute a DNA-binding region (zn(2)-C6 fungal-type). Residues 117-147 (QYHQRTPSYPESIPSLLSSTGPGTSATSPLT) form a disordered region. Residues 130-147 (PSLLSSTGPGTSATSPLT) show a composition bias toward low complexity.

It localises to the nucleus. Its function is as follows. Transcription factor that regulates the expression of the gene cluster that mediates the biosynthesis of monodictyphenone, a prenyl xanthone derivative. The chain is Monodictyphenone cluster transcription factor from Emericella nidulans (strain FGSC A4 / ATCC 38163 / CBS 112.46 / NRRL 194 / M139) (Aspergillus nidulans).